The primary structure comprises 387 residues: Alkanesulfonate monooxygenase (387 aa).

It belongs to the SsuD family.

It catalyses the reaction an alkanesulfonate + FMNH2 + O2 = an aldehyde + FMN + sulfite + H2O + 2 H(+). Functionally, catalyzes the desulfonation of aliphatic sulfonates. In Ralstonia nicotianae (strain ATCC BAA-1114 / GMI1000) (Ralstonia solanacearum), this protein is Alkanesulfonate monooxygenase.